A 199-amino-acid chain; its full sequence is Protein MM_0484 (199 aa).

One can recognise an AMMECR1 domain in the interval 5–196 (TEGRAAVKLA…EKEPDGEVIE (192 aa)).

This Methanosarcina mazei (strain ATCC BAA-159 / DSM 3647 / Goe1 / Go1 / JCM 11833 / OCM 88) (Methanosarcina frisia) protein is Protein MM_0484.